The primary structure comprises 397 residues: Acetate kinase 1 (397 aa).

Asn8 provides a ligand contact to Mg(2+). ATP is bound at residue Lys15. Arg89 provides a ligand contact to substrate. The active-site Proton donor/acceptor is Asp146. ATP contacts are provided by residues 206–210, 281–283, and 329–333; these read HLGNG, DLR, and GIGEN. Glu382 contacts Mg(2+).

This sequence belongs to the acetokinase family. Homodimer. Mg(2+) is required as a cofactor. Mn(2+) serves as cofactor.

The protein localises to the cytoplasm. The catalysed reaction is acetate + ATP = acetyl phosphate + ADP. It functions in the pathway metabolic intermediate biosynthesis; acetyl-CoA biosynthesis; acetyl-CoA from acetate: step 1/2. In terms of biological role, catalyzes the formation of acetyl phosphate from acetate and ATP. Can also catalyze the reverse reaction. This is Acetate kinase 1 from Listeria innocua serovar 6a (strain ATCC BAA-680 / CLIP 11262).